Reading from the N-terminus, the 549-residue chain is Acetyl-coenzyme A transporter 1 (549 aa).

Over residues 1–12 (MSPTISHKDSSR) the composition is skewed to basic and acidic residues. Positions 1 to 46 (MSPTISHKDSSRQRRPGNFSHSLDMKSGPLPPGGWDDSHLDSAGRE) are disordered. Residues 1-74 (MSPTISHKDS…PQSFRAELSS (74 aa)) are Cytoplasmic-facing. Phosphoserine is present on residues S22 and S42. Residues 36-46 (DDSHLDSAGRE) are compositionally biased toward basic and acidic residues. The chain crosses the membrane as a helical span at residues 75–95 (ILLLLFLYVLQGIPLGLAGSI). Residues 96 to 113 (PLILQSKNVSYTDQAFFS) lie on the Extracellular side of the membrane. N-linked (GlcNAc...) asparagine glycosylation occurs at N103. A helical membrane pass occupies residues 114–134 (FVFWPFSLKLLWAPLVDAVYV). Over 135–141 (KNFGRRK) the chain is Cytoplasmic. A helical membrane pass occupies residues 142-162 (SWLVPTQYILGLFMIYLSTQV). The Extracellular portion of the chain corresponds to 163–175 (DRLLGNTDDRTPD). A helical membrane pass occupies residues 176–196 (VIALTVAFFLFEFLAATQDIA). The Cytoplasmic segment spans residues 197–217 (VDGWALTMLSRENVGYASTCN). Residues 218–238 (SVGQTAGYFLGNVLFLALESA) traverse the membrane as a helical segment. Residues 239–256 (DFCNKYLRFQPQPRGIVT) are Extracellular-facing. The helical transmembrane segment at 257–277 (LSDFLFFWGTVFLITTTLVAL) threads the bilayer. Over 278-299 (LKKENEVSVVKEETQGITDTYK) the chain is Cytoplasmic. A helical transmembrane segment spans residues 300–320 (LLFAIIKMPAVLTFCLLILTA). Over 321–343 (KIGFSAADAVTGLKLVEEGVPKE) the chain is Extracellular. Residues 344–364 (HLALLAVPMVPLQIILPLIIS) form a helical membrane-spanning segment. Topologically, residues 365–378 (KYTAGPQPLNTFYK) are cytoplasmic. Residues 379 to 398 (AMPYRLLLGLEYALLVWWTP) form a helical membrane-spanning segment. Over 399–404 (KVEHQG) the chain is Extracellular. The chain crosses the membrane as a helical span at residues 405-425 (GFPIYYYIVVLLSYALHQVTV). Over 426–508 (YSMYVSIMAF…LGGSCVTALD (83 aa)) the chain is Cytoplasmic. The chain crosses the membrane as a helical span at residues 509–529 (GYYVESIICVFIGFGWWFFLG). At 530 to 549 (PKFKKLQDEGSSSWKCKRNN) the chain is on the extracellular side.

Belongs to the SLC33A transporter family. Homodimerizes. As to expression, ubiquitous. Detected in heart, brain, placenta, lung, liver, skeletal muscle, kidney and pancreas. With strongest signals in pancreas.

The protein resides in the endoplasmic reticulum membrane. The catalysed reaction is acetyl-CoA(in) = acetyl-CoA(out). Functionally, acetyl-CoA transporter that mediates active acetyl-CoA import through the endoplasmic reticulum (ER) membrane into the ER lumen where specific ER-based acetyl-CoA:lysine acetyltransferases are responsible for the acetylation of ER-based protein substrates, such as BACE1. Necessary for O-acetylation of gangliosides. The polypeptide is Acetyl-coenzyme A transporter 1 (Homo sapiens (Human)).